The following is a 490-amino-acid chain: MCSHDPLHFVVIPFMAQGHMIPLVDISRLLSQRQGVTVCIITTTQNVAKIKTSLSFSSLFATINIVEVKFLSQQTGLPEGCESLDMLASMGDMVKFFDAANSLEEQVEKAMEEMVQPRPSCIIGDMSLPFTSRLAKKFKIPKLIFHGFSCFSLMSIQVVRESGILKMIESNDEYFDLPGLPDKVEFTKPQVSVLQPVEGNMKESTAKIIEADNDSYGVIVNTFEELEVDYAREYRKARAGKVWCVGPVSLCNRLGLDKAKRGDKASIGQDQCLQWLDSQETGSVLYVCLGSLCNLPLAQLKELGLGLEASNKPFIWVIREWGKYGDLANWMQQSGFEERIKDRGLVIKGWAPQVFILSHASIGGFLTHCGWNSTLEGITAGVPLLTWPLFAEQFLNEKLVVQILKAGLKIGVEKLMKYGKEEEIGAMVSRECVRKAVDELMGDSEEAEERRRKVTELSDLANKALEKGGSSDSNITLLIQDIMEQSQNQF.

UDP-alpha-D-glucose-binding positions include Ser-291, 351-353 (APQ), 368-376 (HCGWNSTLE), and 390-393 (FAEQ).

This sequence belongs to the UDP-glycosyltransferase family.

This is UDP-glycosyltransferase 73C7 (UGT73C7) from Arabidopsis thaliana (Mouse-ear cress).